A 572-amino-acid polypeptide reads, in one-letter code: NADP-dependent malic enzyme (572 aa).

Met1 carries the N-acetylmethionine modification. Tyr102 functions as the Proton donor in the catalytic mechanism. Arg155 provides a ligand contact to NADP(+). The Proton acceptor role is filled by Lys173. 3 residues coordinate a divalent metal cation: Glu245, Asp246, and Asp269. NADP(+)-binding positions include Asp269 and 301–318 (GAGE…MAME). Ser336 carries the post-translational modification Phosphoserine. Residue Asn408 coordinates NADP(+).

Belongs to the malic enzymes family. Homotetramer. It depends on Mg(2+) as a cofactor. The cofactor is Mn(2+). As to expression, ubiquitous. Up-regulated by 3,5,3'-triiodo-L-thyronine in the liver, kidney and heart.

Its subcellular location is the cytoplasm. It carries out the reaction (S)-malate + NADP(+) = pyruvate + CO2 + NADPH. It catalyses the reaction oxaloacetate + H(+) = pyruvate + CO2. Its function is as follows. Catalyzes the oxidative decarboxylation of (S)-malate in the presence of NADP(+) and divalent metal ions, and decarboxylation of oxaloacetate. This is NADP-dependent malic enzyme (Me1) from Rattus norvegicus (Rat).